A 203-amino-acid polypeptide reads, in one-letter code: Urease accessory protein UreG (203 aa).

GTP is bound at residue 13-20 (GPVGSGKT).

The protein belongs to the SIMIBI class G3E GTPase family. UreG subfamily. As to quaternary structure, homodimer. UreD, UreF and UreG form a complex that acts as a GTP-hydrolysis-dependent molecular chaperone, activating the urease apoprotein by helping to assemble the nickel containing metallocenter of UreC. The UreE protein probably delivers the nickel.

The protein localises to the cytoplasm. Functionally, facilitates the functional incorporation of the urease nickel metallocenter. This process requires GTP hydrolysis, probably effectuated by UreG. The polypeptide is Urease accessory protein UreG (Psychromonas ingrahamii (strain DSM 17664 / CCUG 51855 / 37)).